We begin with the raw amino-acid sequence, 366 residues long: Beta sliding clamp (366 aa).

Residues 1 to 125 (MKFTVEREHL…FPNLDDWQSE (125 aa)) are i. An II region spans residues 126–253 (VEFTLPQATM…YRRVLPKNPD (128 aa)). The interval 254–366 (KHLEAGCDLL…AAYVVMPMRL (113 aa)) is III.

This sequence belongs to the beta sliding clamp family. As to quaternary structure, forms a ring-shaped head-to-tail homodimer around DNA which binds and tethers DNA polymerases and other proteins to the DNA. The DNA replisome complex has a single clamp-loading complex (3 tau and 1 each of delta, delta', psi and chi subunits) which binds 3 Pol III cores (1 core on the leading strand and 2 on the lagging strand) each with a beta sliding clamp dimer. Additional proteins in the replisome are other copies of gamma, psi and chi, Ssb, DNA helicase and RNA primase.

It localises to the cytoplasm. Its function is as follows. Confers DNA tethering and processivity to DNA polymerases and other proteins. Acts as a clamp, forming a ring around DNA (a reaction catalyzed by the clamp-loading complex) which diffuses in an ATP-independent manner freely and bidirectionally along dsDNA. Initially characterized for its ability to contact the catalytic subunit of DNA polymerase III (Pol III), a complex, multichain enzyme responsible for most of the replicative synthesis in bacteria; Pol III exhibits 3'-5' exonuclease proofreading activity. The beta chain is required for initiation of replication as well as for processivity of DNA replication. In Escherichia coli O157:H7, this protein is Beta sliding clamp (dnaN).